The chain runs to 1028 residues: Beta-galactosidase (1028 aa).

The substrate site is built by Asn-104 and Asp-203. Position 203 (Asp-203) interacts with Na(+). Residues Glu-418, His-420, and Glu-463 each contribute to the Mg(2+) site. Residues Glu-463 and 539–542 each bind substrate; that span reads EYAH. The Proton donor role is filled by Glu-463. Glu-539 (nucleophile) is an active-site residue. Mg(2+) is bound at residue Asn-599. Phe-603 and Asn-606 together coordinate Na(+). Positions 606 and 1004 each coordinate substrate.

It belongs to the glycosyl hydrolase 2 family. Homodimer. Mg(2+) serves as cofactor. The cofactor is Mn(2+). It depends on Fe cation as a cofactor. Requires Na(+) as cofactor. K(+) is required as a cofactor.

It catalyses the reaction Hydrolysis of terminal non-reducing beta-D-galactose residues in beta-D-galactosides.. Its activity is regulated as follows. Completely inhibited by Hg(2+), Cu(2+) Ag(2+), and partially inhibited by Zn(2+), imidazole and EDTA. Activated by Ca(2+), Co(2+), Ni(2+). Functionally, this beta-galactosidase is also able to catalyze glycosyl transfer to a series of acceptors, including hexose, pentose, beta- or alpha-disaccharides, hexahydroxy alcohol, cyclitol, and aromatic glycosides, resulting in the production of galacto-oligosaccharides (GOS). This chain is Beta-galactosidase (lacZ), found in Enterobacter agglomerans (Erwinia herbicola).